Reading from the N-terminus, the 799-residue chain is Protein phosphatase 1 regulatory subunit 3F (799 aa).

The interval 1-30 is disordered; it reads MARTAPVEPPLRHPAPPSPAAGEPRASAEA. At 1–772 the chain is on the cytoplasmic side; sequence MARTAPVEPP…LTQTLGVLAG (772 aa). Over residues 7 to 19 the composition is skewed to pro residues; it reads VEPPLRHPAPPSP. Ser18 is modified (phosphoserine). The segment covering 20-30 has biased composition (low complexity); sequence AAGEPRASAEA. The PP1-binding motif signature appears at 36–39; that stretch reads RVLF. 4 disordered regions span residues 53–108, 201–235, 332–353, and 417–439; these read RYRP…PVPA, SPPG…SPDD, RRRP…LAEH, and ATCG…DRAA. Acidic residues predominate over residues 78–97; sequence ADEEDDGEDGDEGEEEEEAF. A CBM21 domain is found at 127–283; the sequence is LERLGRVMVE…NNHGRNYTVL (157 aa). A compositionally biased stretch (basic and acidic residues) spans 334–353; sequence RPFEEEPRMRSADDNTLAEH. The residue at position 545 (Ser545) is a Phosphoserine. Disordered stretches follow at residues 566–600, 663–688, and 722–743; these read KDTE…PPEI, SKSP…SWVP, and PHVN…KRSP. Over residues 569–579 the composition is skewed to acidic residues; that stretch reads EDPDDEGEGED. The segment covering 585–594 has biased composition (low complexity); sequence PSSPEGGSPK. Phosphoserine is present on residues Ser587 and Ser592. The span at 679–688 shows a compositional bias: basic and acidic residues; the sequence is PTERESSWVP. Residues 773–793 traverse the membrane as a helical segment; that stretch reads LVMVPVALNSGVSLLVLVLCL. Residues 794–799 are Extracellular-facing; sequence SLAWFS.

In terms of tissue distribution, highly expressed in brain (at protein level).

Its subcellular location is the membrane. Its function is as follows. Glycogen-targeting subunit for protein phosphatase 1 (PP1). The polypeptide is Protein phosphatase 1 regulatory subunit 3F (Ppp1r3f) (Mus musculus (Mouse)).